The sequence spans 810 residues: MANFINMYRQLLSLPLSALVKNNPIPANPIEELSLNIHQPIVYVLPYTSQTDFVIFRRNCLALGLPDPAEKNEINGVKLPRYVYLDEGRRIFKSKGAKDETTTIFNKYLELHRTSESLDVQLIPVSVLWGRSPGQEDKSDLPNLRLLNGIQKTFAAIWFGRDTFVRFSQAVSLRYMVVEHGSDEKIAQKLARVAKMHFAKQRISATGPRLPNRQAMFNKLLQSEAIRRAIEDEAKSKNISIEKAQKEAYKILDEIAADVSHSSLRAVDRFLRWLWNKLYSGIDVQNSNRVRKLALEGHEIVYVPCHRSHIDYLLLSYVLYHQGLVPPHIAAGINLNFWPIGRMFRSWGAFFIRRTFKGNRLYSAIFREYLSELFHRGYSVEYFIEGGRSRTGRLLAPKTGMMSMTLQALQHSQTRPISIVPVYVGYEHVLEVDTYAKELRGAAKEKENAGLVLRVIKKLRNLGQGFVNFGEPITLSNYLSQHFPDWKEQNHEEKPQWFTPAVNNISKQVMININKAAAVNSMNLVGTALLSSRQRALSREQLLEQLSSYQQLLQNVPYSTDVVLPNVTPQAMLEHVLALDRIGVLIEKDNFGEIVRLERSSAVLMTYYRNNIQHLFVLPSLVASIILHYEAIQKDLLLDAIRKIYPFLQGELFLHFNEDELNVQIHQIINEFARQSVINSNDNFLSINKSKVRILQLWSAGTREILQRYYITVTILQKQPAISRAELEKESQLVAQRLSVLHGINAPEFFDKAVFSSFIANLKEQRYFDESSYTVLDKIEELASTLSHLISTEICLTVKGTIEKSEDLSS.

The HXXXXD motif motif lies at Cys305 to Ile310.

It belongs to the GPAT/DAPAT family.

The protein localises to the cell inner membrane. It catalyses the reaction sn-glycerol 3-phosphate + an acyl-CoA = a 1-acyl-sn-glycero-3-phosphate + CoA. It functions in the pathway phospholipid metabolism; CDP-diacylglycerol biosynthesis; CDP-diacylglycerol from sn-glycerol 3-phosphate: step 1/3. In Haemophilus influenzae (strain PittEE), this protein is Glycerol-3-phosphate acyltransferase.